Reading from the N-terminus, the 386-residue chain is Phosphoglycerate kinase (386 aa).

Residues 21-23, Arg36, 59-62, Arg113, and Arg146 each bind substrate; these read DLN and HLGR. Residues Lys197, Glu314, and 340–343 contribute to the ATP site; that span reads GGDT.

This sequence belongs to the phosphoglycerate kinase family. As to quaternary structure, monomer.

It is found in the cytoplasm. The catalysed reaction is (2R)-3-phosphoglycerate + ATP = (2R)-3-phospho-glyceroyl phosphate + ADP. It functions in the pathway carbohydrate degradation; glycolysis; pyruvate from D-glyceraldehyde 3-phosphate: step 2/5. This chain is Phosphoglycerate kinase, found in Vibrio campbellii (strain ATCC BAA-1116).